Here is a 280-residue protein sequence, read N- to C-terminus: Diaminopimelate epimerase (280 aa).

Substrate contacts are provided by asparagine 13 and asparagine 66. The Proton donor role is filled by cysteine 75. Substrate is bound by residues 76 to 77, asparagine 165, asparagine 198, and 216 to 217; these read GN and ER. The active-site Proton acceptor is the cysteine 225. 226 to 227 lines the substrate pocket; it reads GT.

The protein belongs to the diaminopimelate epimerase family. As to quaternary structure, homodimer.

It localises to the cytoplasm. The catalysed reaction is (2S,6S)-2,6-diaminopimelate = meso-2,6-diaminopimelate. It participates in amino-acid biosynthesis; L-lysine biosynthesis via DAP pathway; DL-2,6-diaminopimelate from LL-2,6-diaminopimelate: step 1/1. In terms of biological role, catalyzes the stereoinversion of LL-2,6-diaminopimelate (L,L-DAP) to meso-diaminopimelate (meso-DAP), a precursor of L-lysine and an essential component of the bacterial peptidoglycan. In Cyanothece sp. (strain PCC 7425 / ATCC 29141), this protein is Diaminopimelate epimerase.